The sequence spans 206 residues: RNA pyrophosphohydrolase (206 aa).

The Nudix hydrolase domain occupies 6–150 (GYRPNVGIVI…KRDVYRKVMK (145 aa)). Positions 38-59 (GGINEGENIETAMYRELYEEVG) match the Nudix box motif. Positions 162 to 191 (KPETVEKPRVERTEKRDFQKRDNQKREFRK) are enriched in basic and acidic residues. A disordered region spans residues 162–206 (KPETVEKPRVERTEKRDFQKRDNQKREFRKSARMWNNSHQKGKAQ).

It belongs to the Nudix hydrolase family. RppH subfamily. The cofactor is a divalent metal cation.

In terms of biological role, accelerates the degradation of transcripts by removing pyrophosphate from the 5'-end of triphosphorylated RNA, leading to a more labile monophosphorylated state that can stimulate subsequent ribonuclease cleavage. In Actinobacillus pleuropneumoniae serotype 5b (strain L20), this protein is RNA pyrophosphohydrolase.